A 186-amino-acid chain; its full sequence is Probable RNA 2'-phosphotransferase (186 aa).

It belongs to the KptA/TPT1 family.

Functionally, removes the 2'-phosphate from RNA via an intermediate in which the phosphate is ADP-ribosylated by NAD followed by a presumed transesterification to release the RNA and generate ADP-ribose 1''-2''-cyclic phosphate (APPR&gt;P). May function as an ADP-ribosylase. In Clostridium perfringens (strain SM101 / Type A), this protein is Probable RNA 2'-phosphotransferase.